Consider the following 353-residue polypeptide: Protein O-mannose kinase (353 aa).

The Cytoplasmic portion of the chain corresponds to 1 to 19 (MEKKAHFVKRDFPPREAPS). The chain crosses the membrane as a helical; Signal-anchor for type II membrane protein span at residues 20–40 (LLLLLLVVAVLLLNALLYLYL). Residues 41 to 353 (GNLHGSSGRA…AAMPSTREML (313 aa)) are Lumenal-facing. The Protein kinase domain occupies 83–353 (VRKLKCVGEG…AAMPSTREML (271 aa)). N163 and N237 each carry an N-linked (GlcNAc...) asparagine glycan.

Belongs to the protein kinase superfamily. Ser/Thr protein kinase family. STKL subfamily.

Its subcellular location is the endoplasmic reticulum membrane. It carries out the reaction 3-O-[beta-D-GalNAc-(1-&gt;3)-beta-D-GlcNAc-(1-&gt;4)-alpha-D-Man]-L-Thr-[protein] + ATP = 3-O-[beta-D-GalNAc-(1-&gt;3)-beta-D-GlcNAc-(1-&gt;4)-(O-6-P-alpha-D-Man)]-Thr-[protein] + ADP + H(+). Protein O-mannose kinase that specifically mediates phosphorylation at the 6-position of an O-mannose of the trisaccharide (N-acetylgalactosamine (GalNAc)-beta-1,3-N-acetylglucosamine (GlcNAc)-beta-1,4-mannose) to generate phosphorylated O-mannosyl trisaccharide (N-acetylgalactosamine-beta-1,3-N-acetylglucosamine-beta-1,4-(phosphate-6-)mannose). Phosphorylated O-mannosyl trisaccharide is a carbohydrate structure present in alpha-dystroglycan (DAG1), which is required for binding laminin G-like domain-containing extracellular proteins with high affinity. Only shows kinase activity when the GalNAc-beta-3-GlcNAc-beta-terminus is linked to the 4-position of O-mannose, suggesting that this disaccharide serves as the substrate recognition motif. This is Protein O-mannose kinase (POMK) from Gallus gallus (Chicken).